The following is a 143-amino-acid chain: Sec-independent protein translocase protein TatB (143 aa).

A helical membrane pass occupies residues 2–22 (FGNIGWGEFMVLLVAALVILG). Positions 97–143 (FDKPGSVSFDKSNPGTKAVSADPSTPTAPQNKPLAAGERPPIDLDAT) are disordered.

The protein belongs to the TatB family. The Tat system comprises two distinct complexes: a TatABC complex, containing multiple copies of TatA, TatB and TatC subunits, and a separate TatA complex, containing only TatA subunits. Substrates initially bind to the TatABC complex, which probably triggers association of the separate TatA complex to form the active translocon.

The protein resides in the cell membrane. Its function is as follows. Part of the twin-arginine translocation (Tat) system that transports large folded proteins containing a characteristic twin-arginine motif in their signal peptide across membranes. Together with TatC, TatB is part of a receptor directly interacting with Tat signal peptides. TatB may form an oligomeric binding site that transiently accommodates folded Tat precursor proteins before their translocation. The protein is Sec-independent protein translocase protein TatB of Rhodococcus opacus (strain B4).